We begin with the raw amino-acid sequence, 218 residues long: uncharacterized protein (218 aa).

A signal peptide spans 1–17 (MLKKIIILFLGIFLLSS). Cysteine 18 carries N-palmitoyl cysteine lipidation. Cysteine 18 carries S-diacylglycerol cysteine lipidation. The stretch at 136–164 (YKEKKIEEELNQIKAMLKETKRDITKYTC) forms a coiled coil.

The protein localises to the cell membrane. This is an uncharacterized protein from Rickettsia typhi (strain ATCC VR-144 / Wilmington).